A 466-amino-acid polypeptide reads, in one-letter code: Voltage-gated potassium channel regulatory subunit KCNG2 (466 aa).

The Cytoplasmic portion of the chain corresponds to 1-174 (MEPWPCSPGG…DVVDNPHSGL (174 aa)). A disordered region spans residues 131–155 (AEARAGPTERGAQGSPARALGPRGR). A helical membrane pass occupies residues 175–196 (AGKLFACVSVSFVAVTAVGLCL). Over 197–217 (STMPDIRAEEERGECSPKCRS) the chain is Extracellular. A helical transmembrane segment spans residues 218–239 (LFVLETVCVAWFSFEFLLRSLQ). Residues 240 to 250 (AESKCAFLRAP) are Cytoplasmic-facing. A helical membrane pass occupies residues 251–271 (LNIIDILALLPFYVSLLLGLA). The Extracellular portion of the chain corresponds to 272-283 (AGPGGTKLLERA). Residues 284 to 304 (GLVLRLLRALRVLYVMRLARH) traverse the membrane as a helical; Voltage-sensor segment. Over 305 to 319 (SLGLRSLGLTMRRCA) the chain is Cytoplasmic. Residues 320–341 (REFGLLLLFLCVAMALFAPLVH) traverse the membrane as a helical segment. Over 342–356 (LAERELGARRDFSSV) the chain is Extracellular. The helical intramembrane region spans 357–368 (PASYWWAVISMT). The short motif at 369–374 (TVGYGD) is the Selectivity filter element. An intramembrane segment occupies 369–376 (TVGYGDMV). The Extracellular segment spans residues 377–383 (PRSLPGQ). The chain crosses the membrane as a helical span at residues 384–412 (VVALSSILSGILLMAFPVTSIFHTFSRSY). Residues 413–466 (SELKEQQQRAASPEPALQEDSTHSATATEDSSQGPDSAGLADDSADALWVRAGR) are Cytoplasmic-facing. The segment at 416 to 466 (KEQQQRAASPEPALQEDSTHSATATEDSSQGPDSAGLADDSADALWVRAGR) is disordered. Residues 435 to 447 (HSATATEDSSQGP) show a composition bias toward polar residues. The span at 448 to 460 (DSAGLADDSADAL) shows a compositional bias: low complexity.

It belongs to the potassium channel family. G (TC 1.A.1.2) subfamily. Kv6.2/KCNG2 sub-subfamily. In terms of assembly, heterodimer with KCNB1. In terms of tissue distribution, highly expressed in heart, liver, skeletal muscle, kidney and pancreas. Detected at low levels in brain, lung and placenta.

It localises to the cell membrane. In terms of biological role, regulatory alpha-subunit of the voltage-gated potassium (Kv) channel which, when coassembled with KCNB1, can modulate the kinetics and conductance-voltage relationship. Modulates channel activity by shifting the threshold and the half-maximal activation to more negative values. Potassium channel subunit that does not form functional channels by itself. The polypeptide is Voltage-gated potassium channel regulatory subunit KCNG2 (Homo sapiens (Human)).